Consider the following 142-residue polypeptide: COA8 family protein CBG23705, mitochondrial (142 aa).

Belongs to the COA8 family.

Its subcellular location is the mitochondrion inner membrane. Its function is as follows. May be required for cytochrome c complex (COX) assembly and function, COX being the terminal component of the mitochondrial respiratory chain. In Caenorhabditis briggsae, this protein is COA8 family protein CBG23705, mitochondrial.